A 739-amino-acid chain; its full sequence is DEAD-box ATP-dependent RNA helicase 32 (739 aa).

A Q motif motif is present at residues 71-99 (RKFAQLPISDKTKRGLKDAKYVDMTDVQS). A Helicase ATP-binding domain is found at 102-277 (IPHALCGRDI…RLSLRDPEYI (176 aa)). An ATP-binding site is contributed by 115–122 (ARTGSGKT). Positions 225 to 228 (DEAD) match the DEAD box motif. The Helicase C-terminal domain occupies 303–461 (KLDMLWSFIK…EVSRLLAALL (159 aa)). Residues 643 to 689 (GAEMRKADIEDKKVDKERRREKRMKQKIKRKRGAMEDEEEEEEEDHD) are a coiled coil. The disordered stretch occupies residues 656–725 (VDKERRREKR…GGKINTDSLS (70 aa)). Positions 661–674 (RREKRMKQKIKRKR) are enriched in basic residues. The segment covering 678 to 688 (EDEEEEEEEDH) has biased composition (acidic residues).

Belongs to the DEAD box helicase family. DDX10/DBP4 subfamily.

The enzyme catalyses ATP + H2O = ADP + phosphate + H(+). The chain is DEAD-box ATP-dependent RNA helicase 32 (RH32) from Arabidopsis thaliana (Mouse-ear cress).